Consider the following 199-residue polypeptide: 3-isopropylmalate dehydratase small subunit (199 aa).

It belongs to the LeuD family. LeuD type 1 subfamily. As to quaternary structure, heterodimer of LeuC and LeuD.

It catalyses the reaction (2R,3S)-3-isopropylmalate = (2S)-2-isopropylmalate. It functions in the pathway amino-acid biosynthesis; L-leucine biosynthesis; L-leucine from 3-methyl-2-oxobutanoate: step 2/4. In terms of biological role, catalyzes the isomerization between 2-isopropylmalate and 3-isopropylmalate, via the formation of 2-isopropylmaleate. This is 3-isopropylmalate dehydratase small subunit from Tolumonas auensis (strain DSM 9187 / NBRC 110442 / TA 4).